Consider the following 221-residue polypeptide: uncharacterized protein (221 aa).

The signal sequence occupies residues 1-23 (MNKLIQLALFFTLMLTGCSNSST). Positions 67-221 (ELGKRKAKEE…QGYIDPEDAP (155 aa)) are disordered. Residues 68–150 (LGKRKAKEEA…EQKANAEKKR (83 aa)) are compositionally biased toward basic and acidic residues. Residues 70 to 161 (KRKAKEEAEK…SQAQRQQTEA (92 aa)) are a coiled coil. Residues 152 to 161 (SQAQRQQTEA) are compositionally biased toward polar residues. Residues 162-174 (PSSNSQDPPSSSS) show a composition bias toward low complexity. The span at 175-184 (QTDKTIQQPA) shows a compositional bias: polar residues. The span at 195 to 205 (YEERKKWHDDQ) shows a compositional bias: basic and acidic residues.

This is an uncharacterized protein from Bacillus subtilis (strain 168).